A 208-amino-acid polypeptide reads, in one-letter code: Small ribosomal subunit protein uS4 (208 aa).

Residues 98–158 form the S4 RNA-binding domain; it reads GRLDNVVYRM…EKSKKQARIK (61 aa).

This sequence belongs to the universal ribosomal protein uS4 family. Part of the 30S ribosomal subunit. Contacts protein S5. The interaction surface between S4 and S5 is involved in control of translational fidelity.

In terms of biological role, one of the primary rRNA binding proteins, it binds directly to 16S rRNA where it nucleates assembly of the body of the 30S subunit. Functionally, with S5 and S12 plays an important role in translational accuracy. This Actinobacillus pleuropneumoniae serotype 5b (strain L20) protein is Small ribosomal subunit protein uS4.